The chain runs to 1164 residues: FH1/FH2 domain-containing protein 1 (1164 aa).

One can recognise a GBD/FH3 domain in the interval 53-458 (AQIPAVHRLL…AAETEKQVAL (406 aa)). 2 disordered regions span residues 340–411 (DIEE…VGPP) and 470–500 (MPNEAGGHPDARQLWDSPETAPAARTPQSPA). Positions 355–368 (KPSSEEGKRSRRSL) are enriched in basic and acidic residues. The residue at position 367 (Ser-367) is a Phosphoserine. Positions 402 to 411 (GPASSPVGPP) are enriched in low complexity. The residue at position 486 (Ser-486) is a Phosphoserine. Residues 487 to 615 (PETAPAARTP…LAAPLPHSVP (129 aa)) enclose the FH1 domain. Thr-495 is modified (phosphothreonine). 3 positions are modified to phosphoserine: Ser-498, Ser-523, and Ser-573. The segment at 566–619 (GKDIPAPSPPLPLLSGVPPPPPLPPPPPIKGPFPPPPPLPLAAPLPHSVPDSSA) is disordered. Over residues 571–608 (APSPPLPLLSGVPPPPPLPPPPPIKGPFPPPPPLPLAA) the composition is skewed to pro residues. Positions 612–807 (HSVPDSSALP…AEPLFDLKVG (196 aa)) are interaction with ROCK1. One can recognise an FH2 domain in the interval 616-1013 (DSSALPTKRK…YRERNKTRGR (398 aa)). Thr-690 carries the phosphothreonine modification. Positions 884–921 (LTRCAKVDFEQLTENLGQLERRSRAAEESLRSLAKHEL) form a coiled coil. The interval 1020 to 1143 (KFSGVAGEAP…NRKSLRRTLK (124 aa)) is disordered. Over residues 1028–1041 (APSNPSVPVAVSSG) the composition is skewed to low complexity. The DAD domain maps to 1053-1133 (MKSLLTSRPE…AARERKRSRG (81 aa)). Polar residues predominate over residues 1073–1089 (MVQSSSPIMPTVGPSTA). Positions 1127 to 1142 (ERKRSRGNRKSLRRTL) are enriched in basic residues.

Belongs to the formin homology family. As to quaternary structure, self-associates via the FH2 domain. Binds to F-actin via its N-terminus. Binds to the cytoplasmic domain of CD21 via its C-terminus. Interacts with ROCK1 in a Src-dependent manner. Post-translationally, phosphorylated by ROCK1. In terms of tissue distribution, ubiquitous. Highly expressed in spleen.

Its subcellular location is the cytoplasm. It localises to the cytoskeleton. The protein localises to the cell projection. It is found in the bleb. In terms of biological role, required for the assembly of F-actin structures, such as stress fibers. Depends on the Rho-ROCK cascade for its activity. Contributes to the coordination of microtubules with actin fibers and plays a role in cell elongation. Acts synergistically with ROCK1 to promote SRC-dependent non-apoptotic plasma membrane blebbing. This is FH1/FH2 domain-containing protein 1 (FHOD1) from Homo sapiens (Human).